The chain runs to 446 residues: Tol-Pal system protein TolB (446 aa).

Positions 1-36 are cleaved as a signal peptide; sequence MMDVQTVRRGNAVQSLMSKLILPLVMAVAFALPARA. A disordered region spans residues 424-446; it reads GYNERPSPTPTFASDPAWSPRIQ.

Belongs to the TolB family. As to quaternary structure, the Tol-Pal system is composed of five core proteins: the inner membrane proteins TolA, TolQ and TolR, the periplasmic protein TolB and the outer membrane protein Pal. They form a network linking the inner and outer membranes and the peptidoglycan layer.

It localises to the periplasm. Functionally, part of the Tol-Pal system, which plays a role in outer membrane invagination during cell division and is important for maintaining outer membrane integrity. The sequence is that of Tol-Pal system protein TolB from Parvibaculum lavamentivorans (strain DS-1 / DSM 13023 / NCIMB 13966).